The sequence spans 504 residues: Transcription factor NDT80 (504 aa).

Disordered stretches follow at residues 64–172, 283–310, and 477–504; these read MHFN…QHHM, NGFP…NQHA, and RGRS…TPPQ. Low complexity-rich tracts occupy residues 73 to 87, 103 to 145, 153 to 172, and 292 to 301; these read QQQQ…QQQQ, QGPT…ARQP, QQAQ…QHHM, and HPQNQPQNHP. Positions 160–488 form a DNA-binding region, NDT80; that stretch reads QADAQSQAQQ…RSPSSYHKDR (329 aa).

Its subcellular location is the nucleus. Its function is as follows. Meiosis-specific transcription factor that binds to the middle sporulation element (MSE) of targeted genes corresponding to the consensus sequence 5'-ACACAAA-3'. Acts as an activator of CDR1 induction by antifungal drugs. Modulates azole sensitivity by controlling the expression of ergosterol biosynthesis genes. Required for hyphal growth in response to different filament-inducing cues and for the proper expression of genes characterizing the filamentous transcriptional program including noteworthy genes encoding cell wall components, such as HWP1, ECE1, RBT4, and ALS3. Is essential for the completion of cell separation through the direct transcriptional regulation of genes encoding the chitinase CHT3 and the cell wall glucosidase SUN41. Required for biofilm formation and plays a key role in microcolony formation under both flow and static conditions and to epithelial surfaces. Essential for virulence. In Candida albicans (strain SC5314 / ATCC MYA-2876) (Yeast), this protein is Transcription factor NDT80.